Here is a 79-residue protein sequence, read N- to C-terminus: Omega-phylotoxin-To1a (79 aa).

Positions 1 to 21 (MKKTFCFILILVCIVLKSVNA) are cleaved as a signal peptide. Residues 22-38 (EEEDNFEESSLEMETAR) constitute a propeptide that is removed on maturation. Cystine bridges form between Cys-39–Cys-59, Cys-46–Cys-63, Cys-58–Cys-78, and Cys-65–Cys-76.

As to expression, expressed by the venom duct.

The protein localises to the secreted. Insect-specific toxin that probably acts as an inhibitor of presynaptic insect calcium channels, presumably Cav2 subtype. In vivo, induces immediate paralysis on insects, followed by death when high doses are injected. The polypeptide is Omega-phylotoxin-To1a (Tibellus oblongus (Oblong running crab spider)).